A 227-amino-acid chain; its full sequence is uncharacterized protein (227 aa).

A Response regulatory domain is found at 2–115 (KILMIEDNVS…TLVARIKAVI (114 aa)). At Asp51 the chain carries 4-aspartylphosphate. A DNA-binding region (ompR/PhoB-type) is located at residues 128 to 226 (EDMIETECFT…VWGVGYKFDE (99 aa)).

Post-translationally, phosphorylated by YclK.

The protein localises to the cytoplasm. In terms of biological role, could be member of the two-component regulatory system YclK/YclJ. This is an uncharacterized protein from Bacillus subtilis (strain 168).